A 201-amino-acid polypeptide reads, in one-letter code: 3-isopropylmalate dehydratase small subunit 1 (201 aa).

The protein belongs to the LeuD family. LeuD type 1 subfamily. In terms of assembly, heterodimer of LeuC and LeuD.

It catalyses the reaction (2R,3S)-3-isopropylmalate = (2S)-2-isopropylmalate. It participates in amino-acid biosynthesis; L-leucine biosynthesis; L-leucine from 3-methyl-2-oxobutanoate: step 2/4. In terms of biological role, catalyzes the isomerization between 2-isopropylmalate and 3-isopropylmalate, via the formation of 2-isopropylmaleate. In Salmonella typhimurium (strain LT2 / SGSC1412 / ATCC 700720), this protein is 3-isopropylmalate dehydratase small subunit 1.